We begin with the raw amino-acid sequence, 1053 residues long: LRR receptor-like serine/threonine-protein kinase GHR1 (1053 aa).

The signal sequence occupies residues 1–18; the sequence is MNLSRILLLSMFFLSAMG. The Extracellular segment spans residues 19-630; that stretch reads QLPSQDIMAL…NKSTNKLVKV (612 aa). LRR repeat units lie at residues 73–93, 94–119, 121–141, 142–165, 166–189, 191–212, 213–237, 239–260, 262–285, 286–309, 310–333, 335–357, and 358–384; these read GVVL…FSNL, TKLV…SFKS, QFLD…IGRS, VSLR…MGGL, ISLQ…LTRL, DLLY…GFEL, ISSL…FFLL, NASY…LLPG, SESI…GFQL, FQNL…FNYV, YDLE…LLKG, SLLL…SIMS, and TTLH…CVLL. N-linked (GlcNAc...) asparagine glycosylation is present at Asn-92. Residues Ser-100 and Ser-102 each carry the phosphoserine; by HT1 modification. A glycan (N-linked (GlcNAc...) asparagine) is linked at Asn-103. A phosphoserine; by HT1 mark is found at Ser-105 and Ser-126. Asn-146 and Asn-153 each carry an N-linked (GlcNAc...) asparagine glycan. A glycan (N-linked (GlcNAc...) asparagine) is linked at Asn-196. An N-linked (GlcNAc...) asparagine glycan is attached at Asn-239. Residue Ser-262 is modified to Phosphoserine; by HT1. Asn-269 is a glycosylation site (N-linked (GlcNAc...) asparagine). Ser-278 is subject to Phosphoserine; by HT1. At Thr-280 the chain carries Phosphothreonine; by HT1. Ser-281 carries the post-translational modification Phosphoserine; by HT1. The residue at position 325 (Ser-325) is a Phosphoserine; by HT1. Asn-347 is a glycosylation site (N-linked (GlcNAc...) asparagine). N-linked (GlcNAc...) asparagine glycosylation is present at Asn-394. 8 LRR repeats span residues 401 to 425, 426 to 449, 450 to 474, 476 to 498, 499 to 521, 522 to 546, 548 to 570, and 572 to 592; these read WENI…TPQL, LRAN…IPTH, YPKL…LLSM, TLEE…PSSG, SRIR…VFGS, LTNL…MNDI, SLSS…LSSN, and MAFN…LKNF. Residue Tyr-406 is modified to Phosphotyrosine; by HT1. The residue at position 410 (Ser-410) is a Phosphoserine; by HT1. The residue at position 415 (Thr-415) is a Phosphothreonine; by HT1. Ser-417 is subject to Phosphoserine; by HT1. The N-linked (GlcNAc...) asparagine glycan is linked to Asn-432. The residue at position 434 (Ser-434) is a Phosphoserine; by HT1. Asn-534, Asn-566, and Asn-575 each carry an N-linked (GlcNAc...) asparagine glycan. Ser-613, Ser-614, and Ser-616 each carry phosphoserine; by HT1. Asn-621 carries an N-linked (GlcNAc...) asparagine glycan. The chain crosses the membrane as a helical span at residues 631–651; that stretch reads VIIVSCAVALIILILVAILLF. Topologically, residues 652-1053 are cytoplasmic; the sequence is CICKSRRREE…KTIYEDLSSI (402 aa). The segment covering 662–671 has biased composition (basic and acidic residues); that stretch reads RSITGKETNR. The interval 662–684 is disordered; the sequence is RSITGKETNRRAQTIPSGSGGGM. 2 positions are modified to phosphothreonine; by HT1: Thr-669 and Thr-675. Residues Ser-678, Ser-680, Ser-698, Ser-699, and Ser-700 each carry the phosphoserine; by HT1 modification. Position 704 is a phosphoserine (Ser-704). At Thr-713 the chain carries Phosphothreonine; by HT1. 2 positions are modified to phosphoserine; by HT1: Ser-716 and Ser-718. Thr-720 carries the phosphothreonine; by HT1 modification. Ser-721, Ser-724, and Ser-760 each carry phosphoserine; by HT1. The residue at position 764 (Thr-764) is a Phosphothreonine; by HT1. Ser-769 carries the phosphoserine; by HT1 modification. Residues 770–1053 form the Protein kinase domain; it reads RAPAEVLGRS…KTIYEDLSSI (284 aa). ATP-binding positions include 776-784 and Lys-798; that span reads LGRSSHGTS. Phosphothreonine; by HT1 occurs at positions 928 and 1010. A Phosphoserine; by HT1 modification is found at Ser-1015. Residue Thr-1045 is modified to Phosphothreonine; by HT1. Tyr-1047 bears the Phosphotyrosine; by HT1 mark. A phosphoserine; by HT1 mark is found at Ser-1051 and Ser-1052.

Belongs to the protein kinase superfamily. Ser/Thr protein kinase family. Interacts with SLAC1 (via N-terminus). Binds to ABI2, but not ABI1. Interacts with CPK3. In terms of processing, phosphorylated by HT1; this phosphorylation is inhibited by MPK12 and MPK4. In terms of tissue distribution, expressed in guard cells and in the vasculature of roots and leaves.

It localises to the cell membrane. It catalyses the reaction L-seryl-[protein] + ATP = O-phospho-L-seryl-[protein] + ADP + H(+). The catalysed reaction is L-threonyl-[protein] + ATP = O-phospho-L-threonyl-[protein] + ADP + H(+). Its activity is regulated as follows. Negatively regulated by ABI2. In terms of biological role, receptor kinase acting as an early component in abscisic acid (ABA) signaling. Required for darkness, ABA, high CO(2) and hydrogen peroxide (H(2)O(2)) induction of S-type anion currents in guard cells leading to stomatal closure, possibly via the phosphorylation and activation of the anion channel SLAC1 and as a scaffolding component. Seems to act in parallel with SRK2E/OST1 in the ABA signaling pathway which regulates stomatal movement. Binds ATP. Involved in the local and/or systemic stomatal responses (e.g. stomatal closure) to light stress. This chain is LRR receptor-like serine/threonine-protein kinase GHR1, found in Arabidopsis thaliana (Mouse-ear cress).